Consider the following 1175-residue polypeptide: DNA ligase 3 (1175 aa).

Residues 195-243 are disordered; sequence HDFDNDNGDGDDGDGDDNDDDDGDGDSDSDKKKKKSSGGSGSDSGSKKK. Residues 199 to 221 show a composition bias toward acidic residues; the sequence is NDNGDGDDGDGDDNDDDDGDGDS. E281 serves as a coordination point for ATP. The active-site N6-AMP-lysine intermediate is the K283. ATP-binding residues include R288 and R303. Positions 334 and 432 each coordinate Mg(2+). 3 residues coordinate ATP: K437, R448, and K452. Disordered stretches follow at residues 612-669 and 829-869; these read PVGK…LKFV and KSSP…KRGR. Composition is skewed to low complexity over residues 622 to 635 and 829 to 859; these read TTTT…TTTT and KSSP…SSPS. Positions 883–976 constitute a BRCT 1 domain; that stretch reads PSLPIFEDVN…KLLPLHEDYI (94 aa). Positions 984–1036 are disordered; the sequence is PDYSQSSSSSSMSIEEEKIVVTTTSDDPSEGNQQQQDKKVIKESKIIQSKDHS. Over residues 987-996 the composition is skewed to low complexity; it reads SQSSSSSSMS. Polar residues predominate over residues 1004 to 1018; that stretch reads VTTTSDDPSEGNQQQ. Positions 1019-1036 are enriched in basic and acidic residues; sequence QDKKVIKESKIIQSKDHS. In terms of domain architecture, BRCT 2 spans 1067–1174; it reads HLLSIFQECI…DLLDVKNYKL (108 aa).

It belongs to the ATP-dependent DNA ligase family. The cofactor is Mg(2+).

The protein resides in the nucleus. It catalyses the reaction ATP + (deoxyribonucleotide)n-3'-hydroxyl + 5'-phospho-(deoxyribonucleotide)m = (deoxyribonucleotide)n+m + AMP + diphosphate.. Functionally, the alpha isoform interacts with DNA-repair protein XRCC1 and can correct defective DNA strand-break repair and sister chromatid exchange following treatment with ionizing radiation and alkylating agents. The beta isoform does not interact with XRCC1 and may be specifically involved in the completion of homologous recombination events that occur during meiotic prophase. The protein is DNA ligase 3 (lig3) of Dictyostelium discoideum (Social amoeba).